The chain runs to 118 residues: UPF0102 protein Csac_2148 (118 aa).

This sequence belongs to the UPF0102 family.

The sequence is that of UPF0102 protein Csac_2148 from Caldicellulosiruptor saccharolyticus (strain ATCC 43494 / DSM 8903 / Tp8T 6331).